We begin with the raw amino-acid sequence, 473 residues long: MSLHYLPAIIISIAILVLLLVIALKRNHQLAFYITGTGLCIACVSQCSLLSASHFSDELFTFSSMSGVLSVLLLGILIFLWLQLHTWLEKHEANHKEEFYLLLLLASLGALGMIVSEHFASFFLTLELMSLSFVGLIAYSHSQLSSQEAGVKYLILSAVASAFMLMGIAIVYLQTGNLSFQYLADNVNNTNPSSMLFTAGLIFILIGLLFKLSLVPCHLWVADIFEGAPLPTTALLSTVSKLASFVVLWKLFHLGNWQENQIVLTLIGVVAVASMLIGNLLALLQNSILRILAFSSISHFGYLLILLFLFNHNADLLDNPTFPLEALLFYLSAYLITLTGAFSILMKLEGGKSLEALTGLFWSKPLHAASLSIVMLSLAGIPLTLGFMGKFYLVTASVSYQVTWPLPFLVIASVIGLFFYLRVIMVMLSATQSPHSSPSTSGEVASLWFIILLIMGLGTFPALFADTIKSVVG.

Transmembrane regions (helical) follow at residues 3–23 (LHYLPAIIISIAILVLLLVIA), 30–50 (LAFYITGTGLCIACVSQCSLL), 62–82 (FSSMSGVLSVLLLGILIFLWL), 99–119 (FYLLLLLASLGALGMIVSEHF), 120–140 (ASFFLTLELMSLSFVGLIAYS), 153–173 (YLILSAVASAFMLMGIAIVYL), 195–215 (MLFTAGLIFILIGLLFKLSLV), 230–252 (LPTTALLSTVSKLASFVVLWKLF), 262–282 (IVLTLIGVVAVASMLIGNLLA), 291–311 (ILAFSSISHFGYLLILLFLFN), 326–346 (ALLFYLSAYLITLTGAFSILM), 368–388 (AASLSIVMLSLAGIPLTLGFM), 408–428 (FLVIASVIGLFFYLRVIMVML), and 444–464 (VASLWFIILLIMGLGTFPALF).

Belongs to the complex I subunit 2 family. In terms of assembly, NDH-1 is composed of 13 different subunits. Subunits NuoA, H, J, K, L, M, N constitute the membrane sector of the complex.

The protein resides in the cell inner membrane. The enzyme catalyses a quinone + NADH + 5 H(+)(in) = a quinol + NAD(+) + 4 H(+)(out). Its function is as follows. NDH-1 shuttles electrons from NADH, via FMN and iron-sulfur (Fe-S) centers, to quinones in the respiratory chain. The immediate electron acceptor for the enzyme in this species is believed to be ubiquinone. Couples the redox reaction to proton translocation (for every two electrons transferred, four hydrogen ions are translocated across the cytoplasmic membrane), and thus conserves the redox energy in a proton gradient. The polypeptide is NADH-quinone oxidoreductase subunit N (Shewanella woodyi (strain ATCC 51908 / MS32)).